The sequence spans 984 residues: Valine--tRNA ligase (984 aa).

Residues 65–75 (PNVTGSLHMGH) carry the 'HIGH' region motif. A 'KMSKS' region motif is present at residues 579 to 583 (KMSKS). Lysine 582 provides a ligand contact to ATP. The stretch at 954 to 984 (VEVVDAEKAKLAELEGQLTAMTAQMEELKNL) forms a coiled coil.

It belongs to the class-I aminoacyl-tRNA synthetase family. ValS type 1 subfamily. Monomer.

Its subcellular location is the cytoplasm. The enzyme catalyses tRNA(Val) + L-valine + ATP = L-valyl-tRNA(Val) + AMP + diphosphate. Catalyzes the attachment of valine to tRNA(Val). As ValRS can inadvertently accommodate and process structurally similar amino acids such as threonine, to avoid such errors, it has a 'posttransfer' editing activity that hydrolyzes mischarged Thr-tRNA(Val) in a tRNA-dependent manner. The polypeptide is Valine--tRNA ligase (Psychrobacter arcticus (strain DSM 17307 / VKM B-2377 / 273-4)).